The primary structure comprises 1472 residues: Type IV pilus biogenesis factor PilY1 homolog PD_1611 (1472 aa).

Ca(2+)-binding residues include aspartate 1170, aspartate 1172, aspartate 1174, leucine 1176, and aspartate 1178. The span at 1383–1397 (RGSRSSIGNSDTGAV) shows a compositional bias: polar residues. Residues 1383–1403 (RGSRSSIGNSDTGAVSTGGDA) form a disordered region.

The protein belongs to the PilY1 family.

It is found in the fimbrium. Its function is as follows. One of the three PilY1 homologs of X.fastidiosa, which are involved in bacterial twitching motility as component of the filamentous type IV pili (T4P). The twitching motility of this protein is enhanced by calcium, which may provide the bacterium an adaptive advantage in environments with high calcium concentrations. In Xylella fastidiosa (strain Temecula1 / ATCC 700964), this protein is Type IV pilus biogenesis factor PilY1 homolog PD_1611.